We begin with the raw amino-acid sequence, 319 residues long: Cytochrome c biogenesis protein CcsA (319 aa).

Helical transmembrane passes span 9-29, 44-64, 71-91, 143-163, 225-245, 259-273, and 286-306; these read ILTH…LITL, GVIG…AYSG, LYES…FPYF, MVLG…LLVI, IISL…VWAN, TWAF…IYLH, and AIVA…VNLL.

The protein belongs to the CcmF/CycK/Ccl1/NrfE/CcsA family. As to quaternary structure, may interact with Ccs1.

Its subcellular location is the plastid. The protein resides in the chloroplast thylakoid membrane. Required during biogenesis of c-type cytochromes (cytochrome c6 and cytochrome f) at the step of heme attachment. The polypeptide is Cytochrome c biogenesis protein CcsA (Oenothera glazioviana (Large-flowered evening primrose)).